The following is a 340-amino-acid chain: Putative UPF0607 protein ENSP00000332738 (340 aa).

The span at 75–90 (VRAEEPKEATEVKDQV) shows a compositional bias: basic and acidic residues. Disordered stretches follow at residues 75-130 (VRAE…NPRP) and 215-281 (GLLM…KLPC). Polar residues predominate over residues 91 to 126 (ETQGQEDNKTGPCSNGKAASTSRPLETQGNLTSSWY). Positions 228 to 241 (PAALRSSRSSPPRA) are enriched in low complexity. A compositionally biased stretch (basic residues) spans 242-251 (AGHRPRKRKL). The span at 254–266 (PPLQLQQTPPLQL) shows a compositional bias: low complexity.

The protein belongs to the UPF0607 family.

This chain is Putative UPF0607 protein ENSP00000332738, found in Homo sapiens (Human).